Here is a 119-residue protein sequence, read N- to C-terminus: Large ribosomal subunit protein uL18 (119 aa).

This sequence belongs to the universal ribosomal protein uL18 family. In terms of assembly, part of the 50S ribosomal subunit; part of the 5S rRNA/L5/L18/L25 subcomplex. Contacts the 5S and 23S rRNAs.

Functionally, this is one of the proteins that bind and probably mediate the attachment of the 5S RNA into the large ribosomal subunit, where it forms part of the central protuberance. The polypeptide is Large ribosomal subunit protein uL18 (Xylella fastidiosa (strain 9a5c)).